Reading from the N-terminus, the 591-residue chain is MKGAEAIIKALEAEGVKIIFGYPGGAMLPFYDALYDSDLVHILTRHEQAAAHAADGFARASGEAGVCVSTSGPGATNLVTGIATAYADSSPVIALTGQVPTKLIGNDAFQEIDALGLFMPITKHNFQIKKPEEIPETFRAAFEIATTGRPGPVHIDLPKDVQDGEIDIEKYPIPAKVDLPGYKPKTVGHPLQIKKAAKLIAESERPVILAGGGVIISGASEELLRLAEFVKIPVCTTLMGKGCFPEDHPLALGMVGMHGTKAANYAVTECDVLIAIGCRFSDRVTGDIRYFAPEAKIIHIDIDPAEIGKNVRADIPIVGDAKNVLRDLLAALIALEIKDKETWLERIYELKKLSIPMMDFDDKPIKPQRFVKDLMEVLNEIDSKLKNTIITTDVGQNQMWMAHFFKTKMPRSFLASGGLGTMGFGFPAAIGAKVAKPYANVISITGDGGFLMNSQELATISEYDIPVVICIFDNRTLGMVYQWQNLYYGQRQSEVHLGESPDFVKLAESYGVKADRIISPDEIKEKLKEAILSNEPYLLDIVIDPAEALPMVPPGGRLTNIVQPIRVEPKIKKPQFDEIKKIRDMAAVKEF.

Position 47 (Glu47) interacts with thiamine diphosphate. FAD is bound by residues Arg149, 258–279 (HGTK…IGCR), and 301–320 (DIDP…IVGD). A thiamine pyrophosphate binding region spans residues 396 to 476 (QNQMWMAHFF…VVICIFDNRT (81 aa)). Asp447 and Asn474 together coordinate Mg(2+).

The protein belongs to the TPP enzyme family. In terms of assembly, dimer of large and small chains. Requires Mg(2+) as cofactor. It depends on thiamine diphosphate as a cofactor.

It catalyses the reaction 2 pyruvate + H(+) = (2S)-2-acetolactate + CO2. Its pathway is amino-acid biosynthesis; L-isoleucine biosynthesis; L-isoleucine from 2-oxobutanoate: step 1/4. It functions in the pathway amino-acid biosynthesis; L-valine biosynthesis; L-valine from pyruvate: step 1/4. This chain is Probable acetolactate synthase large subunit (ilvB), found in Methanocaldococcus jannaschii (strain ATCC 43067 / DSM 2661 / JAL-1 / JCM 10045 / NBRC 100440) (Methanococcus jannaschii).